Here is a 107-residue protein sequence, read N- to C-terminus: Putative ankyrin repeat protein RP714 (107 aa).

ANK repeat units follow at residues 7-36 (PPLS…DIDV), 40-69 (NGNS…TIDA), and 73-102 (ELAT…NKSA).

This chain is Putative ankyrin repeat protein RP714, found in Rickettsia prowazekii (strain Madrid E).